The chain runs to 332 residues: MGTVKDQLILNVLKEEQTPHNKITVVGVGAVGMACAISILMKDLADELALVDVIEDKLKGEMMDLQHGSLFLKTPKIVSSKDYAVTANSKLVVITAGARQQEGESRLNLVQRNVNIFKFIIPNIVKYSPNCKLLVVSNPVDILTYVAWKLSGFPKNRVIGSGCNLDSARFRYLMGEKLGIHSSSCHGWILGEHGDSSVPVWSGVNVAGVSLKSLHPALGTDSDSEQWKDVHKQVVESAYEVIKLKGYTSWAIGLSVADLAESIMKNLRRVHPISTMIKGLYGINEDVFLSVPCILGQNGISDVVKVTLTTEEESRLKQSADTLWGIQKELQF.

Residue K5 is modified to N6-acetyllysine; alternate. Residue K5 is modified to N6-succinyllysine; alternate. Position 14 is an N6-acetyllysine (K14). At T18 the chain carries Phosphothreonine. 29–57 provides a ligand contact to NAD(+); that stretch reads GAVGMACAISILMKDLADELALVDVIEDK. K57 bears the N6-acetyllysine; alternate mark. K57 is covalently cross-linked (Glycyl lysine isopeptide (Lys-Gly) (interchain with G-Cter in SUMO2); alternate). The residue at position 81 (K81) is an N6-acetyllysine. R99 contacts NAD(+). Residue R106 coordinates substrate. Position 118 is an N6-acetyllysine; alternate (K118). K118 bears the N6-succinyllysine; alternate mark. Position 126 is an N6-acetyllysine (K126). N138 is a binding site for NAD(+). Substrate-binding residues include N138 and R169. H193 serves as the catalytic Proton acceptor. K232 carries the post-translational modification N6-acetyllysine. Position 239 is a phosphotyrosine (Y239). The residue at position 243 (K243) is an N6-acetyllysine. Residue T248 coordinates substrate. Phosphothreonine occurs at positions 309 and 322.

This sequence belongs to the LDH/MDH superfamily. LDH family. As to quaternary structure, homotetramer. Interacts with PTEN upstream reading frame protein MP31. In terms of processing, ISGylated.

The protein localises to the cytoplasm. It catalyses the reaction (S)-lactate + NAD(+) = pyruvate + NADH + H(+). It functions in the pathway fermentation; pyruvate fermentation to lactate; (S)-lactate from pyruvate: step 1/1. In terms of biological role, interconverts simultaneously and stereospecifically pyruvate and lactate with concomitant interconversion of NADH and NAD(+). The protein is L-lactate dehydrogenase A chain (LDHA) of Monodelphis domestica (Gray short-tailed opossum).